The chain runs to 597 residues: Aspartate--tRNA ligase (597 aa).

Residue glutamate 180 participates in L-aspartate binding. The interval 204 to 207 (QLFK) is aspartate. Residue arginine 226 coordinates L-aspartate. Residues 226–228 (RDE) and glutamine 235 each bind ATP. L-aspartate is bound at residue histidine 454. An ATP-binding site is contributed by glutamate 488. Residue arginine 495 participates in L-aspartate binding. 540–543 (GLDR) provides a ligand contact to ATP.

This sequence belongs to the class-II aminoacyl-tRNA synthetase family. Type 1 subfamily. As to quaternary structure, homodimer.

It is found in the cytoplasm. The catalysed reaction is tRNA(Asp) + L-aspartate + ATP = L-aspartyl-tRNA(Asp) + AMP + diphosphate. In terms of biological role, catalyzes the attachment of L-aspartate to tRNA(Asp) in a two-step reaction: L-aspartate is first activated by ATP to form Asp-AMP and then transferred to the acceptor end of tRNA(Asp). This chain is Aspartate--tRNA ligase, found in Clostridium perfringens (strain SM101 / Type A).